The following is a 476-amino-acid chain: 3-isopropylmalate dehydratase large subunit (476 aa).

Residues Cys357, Cys417, and Cys420 each contribute to the [4Fe-4S] cluster site.

This sequence belongs to the aconitase/IPM isomerase family. LeuC type 1 subfamily. In terms of assembly, heterodimer of LeuC and LeuD. The cofactor is [4Fe-4S] cluster.

The enzyme catalyses (2R,3S)-3-isopropylmalate = (2S)-2-isopropylmalate. Its pathway is amino-acid biosynthesis; L-leucine biosynthesis; L-leucine from 3-methyl-2-oxobutanoate: step 2/4. Functionally, catalyzes the isomerization between 2-isopropylmalate and 3-isopropylmalate, via the formation of 2-isopropylmaleate. The chain is 3-isopropylmalate dehydratase large subunit from Mycobacterium avium (strain 104).